A 205-amino-acid polypeptide reads, in one-letter code: Peptidyl-tRNA hydrolase (205 aa).

Tyr14 is a binding site for tRNA. The Proton acceptor role is filled by His19. The tRNA site is built by Tyr64, Asn66, and Asn112.

The protein belongs to the PTH family. As to quaternary structure, monomer.

The protein localises to the cytoplasm. The enzyme catalyses an N-acyl-L-alpha-aminoacyl-tRNA + H2O = an N-acyl-L-amino acid + a tRNA + H(+). Hydrolyzes ribosome-free peptidyl-tRNAs (with 1 or more amino acids incorporated), which drop off the ribosome during protein synthesis, or as a result of ribosome stalling. Functionally, catalyzes the release of premature peptidyl moieties from peptidyl-tRNA molecules trapped in stalled 50S ribosomal subunits, and thus maintains levels of free tRNAs and 50S ribosomes. This Parvibaculum lavamentivorans (strain DS-1 / DSM 13023 / NCIMB 13966) protein is Peptidyl-tRNA hydrolase.